The sequence spans 267 residues: MSQLSFNEASLIYPARGRDGAAQLVLDRINLSVSTGEFVVVIGRSGSGKTSLLNLAAGFQEPSEGKVALDGKIIEGPGSDRAVVFQDDALYPWLDARDNVAFPLRIKGMGERDRRARAGELLELVGLPEAGKRRIWELSGGMRQRVGIARALAAEPRFLLLDEPLGALDALTRSRLQTFLLDVWRKSRSGALLITHSIDEALLLATRIVVLSPNPGRVAADIPSSFAADILAGAPASEVRASPAFKRMHDGLTGLIQAIGPEEELAA.

The ABC transporter domain occupies 6-238 (FNEASLIYPA…DILAGAPASE (233 aa)). 43–50 (GRSGSGKT) contacts ATP.

It belongs to the ABC transporter superfamily. Taurine importer (TC 3.A.1.17.1) family. As to quaternary structure, the complex is composed of two ATP-binding proteins (TauB), two transmembrane proteins (TauC) and a solute-binding protein (TauA).

It is found in the cell inner membrane. It carries out the reaction taurine(out) + ATP + H2O = taurine(in) + ADP + phosphate + H(+). In terms of biological role, part of the ABC transporter complex TauABC involved in taurine import. Responsible for energy coupling to the transport system. The sequence is that of Taurine import ATP-binding protein TauB from Sinorhizobium fredii (strain NBRC 101917 / NGR234).